We begin with the raw amino-acid sequence, 296 residues long: Ribosomal RNA small subunit methyltransferase A (296 aa).

S-adenosyl-L-methionine is bound by residues asparagine 31, leucine 33, glycine 58, glutamate 79, aspartate 111, and asparagine 136.

It belongs to the class I-like SAM-binding methyltransferase superfamily. rRNA adenine N(6)-methyltransferase family. RsmA subfamily.

It localises to the cytoplasm. The catalysed reaction is adenosine(1518)/adenosine(1519) in 16S rRNA + 4 S-adenosyl-L-methionine = N(6)-dimethyladenosine(1518)/N(6)-dimethyladenosine(1519) in 16S rRNA + 4 S-adenosyl-L-homocysteine + 4 H(+). Specifically dimethylates two adjacent adenosines (A1518 and A1519) in the loop of a conserved hairpin near the 3'-end of 16S rRNA in the 30S particle. May play a critical role in biogenesis of 30S subunits. The polypeptide is Ribosomal RNA small subunit methyltransferase A (Lactobacillus delbrueckii subsp. bulgaricus (strain ATCC BAA-365 / Lb-18)).